The sequence spans 179 residues: Ribosome maturation factor RimM (179 aa).

The region spanning V102 to L175 is the PRC barrel domain.

It belongs to the RimM family. Binds ribosomal protein uS19.

The protein resides in the cytoplasm. In terms of biological role, an accessory protein needed during the final step in the assembly of 30S ribosomal subunit, possibly for assembly of the head region. Essential for efficient processing of 16S rRNA. May be needed both before and after RbfA during the maturation of 16S rRNA. It has affinity for free ribosomal 30S subunits but not for 70S ribosomes. This is Ribosome maturation factor RimM from Frankia casuarinae (strain DSM 45818 / CECT 9043 / HFP020203 / CcI3).